The primary structure comprises 233 residues: Large ribosomal subunit protein uL1 (233 aa).

It belongs to the universal ribosomal protein uL1 family. Part of the 50S ribosomal subunit.

Its function is as follows. Binds directly to 23S rRNA. The L1 stalk is quite mobile in the ribosome, and is involved in E site tRNA release. Functionally, protein L1 is also a translational repressor protein, it controls the translation of the L11 operon by binding to its mRNA. This Shewanella pealeana (strain ATCC 700345 / ANG-SQ1) protein is Large ribosomal subunit protein uL1.